The following is a 251-amino-acid chain: MRRPLVAGNWKMHGTRASVAELIEGLRRQELPVEVDVAVFPSSLHVTQVVEGLAGKAVKVGAQDCAAQVEQGALTGELAVSQLVDGGCELVLVGHSERRLILGESDEVVVSKFAAVQKAGLTPVLCVGETREQREANATLGVVGGQLAAVIDALGVQALNNAVVAYEPVWAIGTGLTATPEQAQEVHAAIRAQVAQLDAQVASELRILYGGSVKAASAAELFGMQDIDGGLVGGASLNADEFGAICRAAGN.

Residue 9–11 participates in substrate binding; it reads NWK. Histidine 95 serves as the catalytic Electrophile. Catalysis depends on glutamate 167, which acts as the Proton acceptor. Residues glycine 173, serine 212, and 233-234 contribute to the substrate site; that span reads GG.

Belongs to the triosephosphate isomerase family. In terms of assembly, homodimer.

It localises to the cytoplasm. It carries out the reaction D-glyceraldehyde 3-phosphate = dihydroxyacetone phosphate. It functions in the pathway carbohydrate biosynthesis; gluconeogenesis. It participates in carbohydrate degradation; glycolysis; D-glyceraldehyde 3-phosphate from glycerone phosphate: step 1/1. In terms of biological role, involved in the gluconeogenesis. Catalyzes stereospecifically the conversion of dihydroxyacetone phosphate (DHAP) to D-glyceraldehyde-3-phosphate (G3P). This Ectopseudomonas mendocina (strain ymp) (Pseudomonas mendocina) protein is Triosephosphate isomerase.